Consider the following 137-residue polypeptide: Chaperone protein YscB (137 aa).

As to quaternary structure, interacts with SycN to form a complex which specifically binds to YopN.

The protein resides in the cytoplasm. It localises to the cell inner membrane. In terms of biological role, functions as a specific chaperone for YopN. It could facilitate the secretion and the subsequent translocation of YopN. The chain is Chaperone protein YscB (yscB) from Yersinia pestis.